A 279-amino-acid chain; its full sequence is Pleckstrin homology domain-containing family F member 1 (279 aa).

In terms of domain architecture, PH spans 35–131; the sequence is VLLGEGVLTK…WISHIEECVR (97 aa). The FYVE-type zinc finger occupies 152–212; sequence DKATDICMRC…VCSLCYRELA (61 aa). Residues Cys-158, Cys-161, Cys-175, Cys-178, Cys-183, Cys-186, Cys-204, and Cys-207 each contribute to the Zn(2+) site. Residues 219 to 264 are disordered; sequence EAKERFRGSPGQLTHLGSTMCGASSGDDDDSDEDREGSGDGDWPTQ. The segment covering 244–253 has biased composition (acidic residues); that stretch reads GDDDDSDEDR.

It localises to the nucleus. Its subcellular location is the cytoplasm. It is found in the perinuclear region. The protein localises to the lysosome. In terms of biological role, may induce apoptosis through the lysosomal-mitochondrial pathway. Translocates to the lysosome initiating the permeabilization of lysosomal membrane (LMP) and resulting in the release of CTSD and CTSL to the cytoplasm. Triggers the caspase-independent apoptosis by altering mitochondrial membrane permeabilization (MMP) resulting in the release of PDCD8. This is Pleckstrin homology domain-containing family F member 1 (Plekhf1) from Rattus norvegicus (Rat).